Here is a 282-residue protein sequence, read N- to C-terminus: NADPH-dependent 7-cyano-7-deazaguanine reductase (282 aa).

Substrate is bound at residue 88–90 (IES). 90 to 91 (SK) serves as a coordination point for NADPH. C190 functions as the Thioimide intermediate in the catalytic mechanism. D197 (proton donor) is an active-site residue. 229-230 (HE) provides a ligand contact to substrate. 258-259 (RG) serves as a coordination point for NADPH.

It belongs to the GTP cyclohydrolase I family. QueF type 2 subfamily. As to quaternary structure, homodimer.

Its subcellular location is the cytoplasm. The catalysed reaction is 7-aminomethyl-7-carbaguanine + 2 NADP(+) = 7-cyano-7-deazaguanine + 2 NADPH + 3 H(+). It participates in tRNA modification; tRNA-queuosine biosynthesis. In terms of biological role, catalyzes the NADPH-dependent reduction of 7-cyano-7-deazaguanine (preQ0) to 7-aminomethyl-7-deazaguanine (preQ1). This Salmonella paratyphi B (strain ATCC BAA-1250 / SPB7) protein is NADPH-dependent 7-cyano-7-deazaguanine reductase.